Consider the following 92-residue polypeptide: Defensin-like protein 294 (92 aa).

A signal peptide spans 1-26 (MASRATSLFIFFFLISCTFMLLETNA). 3 cysteine pairs are disulfide-bonded: cysteine 63/cysteine 82, cysteine 69/cysteine 87, and cysteine 75/cysteine 89.

The protein belongs to the DEFL family.

It is found in the secreted. The sequence is that of Defensin-like protein 294 from Arabidopsis thaliana (Mouse-ear cress).